Reading from the N-terminus, the 348-residue chain is Dihydroorotase (348 aa).

The Zn(2+) site is built by His-17 and His-19. Substrate is bound by residues 19–21 and Asn-45; that span reads HLR. Zn(2+) contacts are provided by Lys-103, His-140, and His-178. An N6-carboxylysine modification is found at Lys-103. His-140 provides a ligand contact to substrate. Leu-223 provides a ligand contact to substrate. Residue Asp-251 participates in Zn(2+) binding. Asp-251 is a catalytic residue. The substrate site is built by His-255 and Ala-267.

It belongs to the metallo-dependent hydrolases superfamily. DHOase family. Class II DHOase subfamily. Homodimer. Zn(2+) serves as cofactor.

The enzyme catalyses (S)-dihydroorotate + H2O = N-carbamoyl-L-aspartate + H(+). It functions in the pathway pyrimidine metabolism; UMP biosynthesis via de novo pathway; (S)-dihydroorotate from bicarbonate: step 3/3. Catalyzes the reversible cyclization of carbamoyl aspartate to dihydroorotate. This is Dihydroorotase from Salmonella typhi.